Consider the following 498-residue polypeptide: Cytochrome P450 71B5 (498 aa).

A helical transmembrane segment spans residues 3-23 (IFLCFLLLLPLSLIFLKKLLP). Position 439 (Cys439) interacts with heme.

This sequence belongs to the cytochrome P450 family. It depends on heme as a cofactor.

The protein localises to the membrane. In Arabidopsis thaliana (Mouse-ear cress), this protein is Cytochrome P450 71B5 (CYP71B5).